We begin with the raw amino-acid sequence, 171 residues long: Ribosome maturation factor RimM (171 aa).

Positions 97 to 170 (EGEYYYHEII…LVTIHVMEGL (74 aa)) constitute a PRC barrel domain.

The protein belongs to the RimM family. In terms of assembly, binds ribosomal protein uS19.

The protein localises to the cytoplasm. Its function is as follows. An accessory protein needed during the final step in the assembly of 30S ribosomal subunit, possibly for assembly of the head region. Essential for efficient processing of 16S rRNA. May be needed both before and after RbfA during the maturation of 16S rRNA. It has affinity for free ribosomal 30S subunits but not for 70S ribosomes. The protein is Ribosome maturation factor RimM of Bacillus thuringiensis (strain Al Hakam).